We begin with the raw amino-acid sequence, 128 residues long: Large ribosomal subunit protein bL17 (128 aa).

Belongs to the bacterial ribosomal protein bL17 family. Part of the 50S ribosomal subunit. Contacts protein L32.

The protein is Large ribosomal subunit protein bL17 of Streptococcus pneumoniae serotype 4 (strain ATCC BAA-334 / TIGR4).